The following is a 479-amino-acid chain: Membrane-bound lytic murein transglycosylase F (479 aa).

Positions 1-15 (MKRLLLVLCYITLLA) are cleaved as a signal peptide. Positions 16–258 (GCQKVVVEQE…HLNEKYFAHV (243 aa)) are non-LT domain. The tract at residues 260–479 (RFDYVDTRAF…QTDAIQPQQP (220 aa)) is LT domain. Glutamate 303 is a catalytic residue. A disordered region spans residues 457 to 479 (LQTAEAKETEEKPQTDAIQPQQP). Over residues 461 to 470 (EAKETEEKPQ) the composition is skewed to basic and acidic residues.

The protein in the N-terminal section; belongs to the bacterial solute-binding protein 3 family. In the C-terminal section; belongs to the transglycosylase Slt family.

It localises to the cell outer membrane. It catalyses the reaction Exolytic cleavage of the (1-&gt;4)-beta-glycosidic linkage between N-acetylmuramic acid (MurNAc) and N-acetylglucosamine (GlcNAc) residues in peptidoglycan, from either the reducing or the non-reducing ends of the peptidoglycan chains, with concomitant formation of a 1,6-anhydrobond in the MurNAc residue.. Its function is as follows. Murein-degrading enzyme that degrades murein glycan strands and insoluble, high-molecular weight murein sacculi, with the concomitant formation of a 1,6-anhydromuramoyl product. Lytic transglycosylases (LTs) play an integral role in the metabolism of the peptidoglycan (PG) sacculus. Their lytic action creates space within the PG sacculus to allow for its expansion as well as for the insertion of various structures such as secretion systems and flagella. This Shewanella pealeana (strain ATCC 700345 / ANG-SQ1) protein is Membrane-bound lytic murein transglycosylase F.